The sequence spans 340 residues: Nod factor export ATP-binding protein I (340 aa).

The span at 1-24 (MLKRKLGPEDLRRLETPAIERESH) shows a compositional bias: basic and acidic residues. The segment at 1–34 (MLKRKLGPEDLRRLETPAIERESHGQTSAKSSVP) is disordered. Over residues 25–34 (GQTSAKSSVP) the composition is skewed to polar residues. In terms of domain architecture, ABC transporter spans 42-272 (VDFAGVTKSY…HIGCQVMEIY (231 aa)). 74 to 81 (GPNGAGKS) is an ATP binding site.

Belongs to the ABC transporter superfamily. Lipooligosaccharide exporter (TC 3.A.1.102) family. The complex is composed of two ATP-binding proteins (NodI) and two transmembrane proteins (NodJ).

The protein localises to the cell inner membrane. Its function is as follows. Part of the ABC transporter complex NodIJ involved in the export of the nodulation factors (Nod factors), the bacterial signal molecules that induce symbiosis and subsequent nodulation induction. Nod factors are LCO (lipo-chitin oligosaccharide), a modified beta-1,4-linked N-acetylglucosamine oligosaccharide. This subunit is responsible for energy coupling to the transport system. This chain is Nod factor export ATP-binding protein I, found in Mesorhizobium japonicum (strain LMG 29417 / CECT 9101 / MAFF 303099) (Mesorhizobium loti (strain MAFF 303099)).